The primary structure comprises 89 residues: Huwentoxin-IV (89 aa).

The signal sequence occupies residues 1 to 24 (MVNMKASMFLALAGLVLLFVVCYA). The propeptide occupies 25-52 (SESEEKEFSNELLSSVLAVDDNSKGEER). Glutamate 53 carries the post-translational modification Pyrrolidone carboxylic acid (Glu); partial. 3 disulfide bridges follow: cysteine 54/cysteine 69, cysteine 61/cysteine 76, and cysteine 68/cysteine 83. At isoleucine 87 the chain carries Isoleucine amide.

It belongs to the neurotoxin 10 (Hwtx-1) family. 22 (Htx-4) subfamily. Two forms of huwentoxin-IV exist in the venom of H.schmidti, a non-N-terminally modified (HwTx-IV) and a naturally modified peptide with pyroglutamic acid residue at position 53 (mHwTx-IV). mHwTx-IV shows no observable difference with the unmodified toxin when applied to the TTX-S sodium channel of DRG neuron (IC(50)~50 nM) or when tested on hNav1.7/SCN9A (IC(50)=30.8 nM). In addition, similarly to the unmodified toxin, mHwTx-IV has only a weak affinity for lipid membranes. However, in contrast with HwTx-IV, which dissociates at moderate and high depolarization voltages (50-200 mV), mHwTx-IV inhibition of TTX-sensitive sodium channels is not reversed by strong depolarization voltages. Expressed by the venom gland.

It is found in the secreted. In terms of biological role, this lethal neurotoxin (without cyclization at position 53) inhibits neuronal voltage-gated sodium channel Nav1.2/SCN2A (IC(50)=10-150 nM), rNav1.3/SCN3A (IC(50)=338 nM), Nav1.6/SCN8A (IC(50)=117 nM), and hNav1.7/SCN9A (IC(50)=9.6-33 nM). It inhibits activation of sodium channel by trapping the voltage sensor of domain II (DIIS4) in the closed configuration. The toxin neither shifts the Nav1.7/SCN9A activation curve nor modifies the slope factor. It does not slow fast-inactivation of hNav1.7/SCN9A channels. In addition, it has only a weak affinity for lipid membranes. This toxin also exists with a pyroglutamate at position 53. The sole difference observed between modified (mHwTx-IV) and unmodified toxins is that moderate or high depolarization voltages (200 mV) permit the unmodified toxin to dissociate, whereas mHwTx-IV toxin does not dissociate, even at high depolarization voltages. These data indicate that mHwTx-IV strongly binds to voltage sensor of sodium channel even at extreme depolarization voltages. The polypeptide is Huwentoxin-IV (Cyriopagopus schmidti (Chinese bird spider)).